A 281-amino-acid polypeptide reads, in one-letter code: NADPH-dependent 7-cyano-7-deazaguanine reductase (281 aa).

87 to 89 (IES) is a substrate binding site. NADPH is bound at residue 89-90 (SK). Cysteine 188 functions as the Thioimide intermediate in the catalytic mechanism. Aspartate 195 acts as the Proton donor in catalysis. 227–228 (HE) provides a ligand contact to substrate. Residue 256–257 (RG) coordinates NADPH. The interval 261–281 (INPYRSTEQDKPAHNHRMARQ) is disordered.

Belongs to the GTP cyclohydrolase I family. QueF type 2 subfamily. In terms of assembly, homodimer.

Its subcellular location is the cytoplasm. The catalysed reaction is 7-aminomethyl-7-carbaguanine + 2 NADP(+) = 7-cyano-7-deazaguanine + 2 NADPH + 3 H(+). Its pathway is tRNA modification; tRNA-queuosine biosynthesis. Catalyzes the NADPH-dependent reduction of 7-cyano-7-deazaguanine (preQ0) to 7-aminomethyl-7-deazaguanine (preQ1). This Vibrio parahaemolyticus serotype O3:K6 (strain RIMD 2210633) protein is NADPH-dependent 7-cyano-7-deazaguanine reductase.